The sequence spans 95 residues: Small ribosomal subunit protein uS19 (95 aa).

It belongs to the universal ribosomal protein uS19 family.

Its function is as follows. Protein S19 forms a complex with S13 that binds strongly to the 16S ribosomal RNA. This is Small ribosomal subunit protein uS19 from Coxiella burnetii (strain CbuK_Q154) (Coxiella burnetii (strain Q154)).